We begin with the raw amino-acid sequence, 100 residues long: NADH-quinone oxidoreductase subunit K (100 aa).

The next 3 helical transmembrane spans lie at 2–22 (ISLN…LFGI), 28–48 (ILML…GFVA), and 63–83 (LFII…VVIW).

Belongs to the complex I subunit 4L family. In terms of assembly, NDH-1 is composed of 14 different subunits. Subunits NuoA, H, J, K, L, M, N constitute the membrane sector of the complex.

The protein localises to the cell inner membrane. It catalyses the reaction a quinone + NADH + 5 H(+)(in) = a quinol + NAD(+) + 4 H(+)(out). Functionally, NDH-1 shuttles electrons from NADH, via FMN and iron-sulfur (Fe-S) centers, to quinones in the respiratory chain. The immediate electron acceptor for the enzyme in this species is believed to be ubiquinone. Couples the redox reaction to proton translocation (for every two electrons transferred, four hydrogen ions are translocated across the cytoplasmic membrane), and thus conserves the redox energy in a proton gradient. In Helicobacter hepaticus (strain ATCC 51449 / 3B1), this protein is NADH-quinone oxidoreductase subunit K.